A 444-amino-acid polypeptide reads, in one-letter code: Tol-Pal system protein TolB (444 aa).

An N-terminal signal peptide occupies residues Met1 to Ala18.

Belongs to the TolB family. As to quaternary structure, the Tol-Pal system is composed of five core proteins: the inner membrane proteins TolA, TolQ and TolR, the periplasmic protein TolB and the outer membrane protein Pal. They form a network linking the inner and outer membranes and the peptidoglycan layer.

It localises to the periplasm. In terms of biological role, part of the Tol-Pal system, which plays a role in outer membrane invagination during cell division and is important for maintaining outer membrane integrity. The polypeptide is Tol-Pal system protein TolB (Rickettsia canadensis (strain McKiel)).